The primary structure comprises 320 residues: Cytochrome f (320 aa).

The signal sequence occupies residues 1–35 (MQTRKTFSWIKEEITRSISVLLMIYIITWASISNA). Residues tyrosine 36, cysteine 56, cysteine 59, and histidine 60 each coordinate heme. The helical transmembrane segment at 286 to 306 (VQGLLFFLASVILAQIFLVLK) threads the bilayer.

This sequence belongs to the cytochrome f family. In terms of assembly, the 4 large subunits of the cytochrome b6-f complex are cytochrome b6, subunit IV (17 kDa polypeptide, petD), cytochrome f and the Rieske protein, while the 4 small subunits are PetG, PetL, PetM and PetN. The complex functions as a dimer. Heme serves as cofactor.

The protein resides in the plastid. It localises to the chloroplast thylakoid membrane. In terms of biological role, component of the cytochrome b6-f complex, which mediates electron transfer between photosystem II (PSII) and photosystem I (PSI), cyclic electron flow around PSI, and state transitions. This chain is Cytochrome f, found in Manihot esculenta (Cassava).